Reading from the N-terminus, the 215-residue chain is UPF0488 protein C8orf33 homolog (215 aa).

Disordered regions lie at residues 1–72 (MLED…DEQL), 87–111 (LRTQ…RSSK), and 158–199 (CKPV…DTKP). The segment covering 29–39 (AKKHKKKKKKK) has biased composition (basic residues). Residues 40-63 (AGEGKDDQQRETKTTEGETAKQET) are compositionally biased toward basic and acidic residues. Composition is skewed to basic and acidic residues over residues 167–178 (ERNTQPKNKTDG) and 188–199 (TNEHTKTEDTKP).

This sequence belongs to the UPF0488 family.

The sequence is that of UPF0488 protein C8orf33 homolog from Danio rerio (Zebrafish).